The primary structure comprises 225 residues: Thymidylate kinase (225 aa).

10–17 is a binding site for ATP; sequence GVEGGGKT.

The protein belongs to the thymidylate kinase family.

It catalyses the reaction dTMP + ATP = dTDP + ADP. In terms of biological role, phosphorylation of dTMP to form dTDP in both de novo and salvage pathways of dTTP synthesis. The polypeptide is Thymidylate kinase (Trichodesmium erythraeum (strain IMS101)).